The primary structure comprises 1194 residues: Peroxisomal ATPase PEX1 (1194 aa).

Residues 220–255 (KTRQRRMSHQGKSVKAKSLASTRHGKRRDDGSGPSG) are disordered. A compositionally biased stretch (basic residues) spans 221 to 234 (TRQRRMSHQGKSVK). Residues 538-730 (RSASVLLTGA…GPEPTLKIEK (193 aa)) form an AAA-cassette D1 region. ATP is bound by residues 546-553 (GARGSGKT) and 849-856 (GYPGCGKT). The AAA-cassette D2 stretch occupies residues 844 to 1028 (GLLLYGYPGC…LYNAHLEAIH (185 aa)). Disordered regions lie at residues 1062–1084 (YISF…LTNG), 1116–1139 (QVQQ…EPVI), and 1174–1194 (RSGE…SSLM). A compositionally biased stretch (polar residues) spans 1066–1084 (SMGNKDSTGEPSTQPLTNG). A compositionally biased stretch (low complexity) spans 1116–1127 (QVQQQQSQTNQA).

Belongs to the AAA ATPase family. Interacts with PEX6; forming the PEX1-PEX6 AAA ATPase complex, which is composed of a heterohexamer formed by a trimer of PEX1-PEX6 dimers.

It localises to the cytoplasm. Its subcellular location is the cytosol. The protein localises to the peroxisome membrane. It carries out the reaction ATP + H2O = ADP + phosphate + H(+). In terms of biological role, component of the PEX1-PEX6 AAA ATPase complex, a protein dislocase complex that mediates the ATP-dependent extraction of the PEX5 receptor from peroxisomal membranes, an essential step for PEX5 recycling. Specifically recognizes PEX5 monoubiquitinated at 'Cys-6', and pulls it out of the peroxisome lumen through the PEX2-PEX10-PEX12 retrotranslocation channel. Extraction by the PEX1-PEX6 AAA ATPase complex is accompanied by unfolding of the TPR repeats and release of bound cargo from PEX5. Regulates autophagy and biogenesis of peroxisomes and Woronin bodies. Plays important roles in mycelial growth and development and stress response. Is also essential for conidiation and fatty acid utilization. Required for nematode predation via trap formation. The chain is Peroxisomal ATPase PEX1 from Arthrobotrys oligospora (strain ATCC 24927 / CBS 115.81 / DSM 1491) (Nematode-trapping fungus).